Reading from the N-terminus, the 812-residue chain is Valine--tRNA ligase (812 aa).

The 'HIGH' region signature appears at 46–56 (PTVSGQLHIGH). The short motif at 536 to 540 (KMSKS) is the 'KMSKS' region element. Residue Lys539 coordinates ATP.

The protein belongs to the class-I aminoacyl-tRNA synthetase family. ValS type 2 subfamily. In terms of assembly, monomer.

The protein localises to the cytoplasm. The enzyme catalyses tRNA(Val) + L-valine + ATP = L-valyl-tRNA(Val) + AMP + diphosphate. Its function is as follows. Catalyzes the attachment of valine to tRNA(Val). As ValRS can inadvertently accommodate and process structurally similar amino acids such as threonine, to avoid such errors, it has a 'posttransfer' editing activity that hydrolyzes mischarged Thr-tRNA(Val) in a tRNA-dependent manner. This is Valine--tRNA ligase from Rickettsia bellii (strain RML369-C).